Here is a 186-residue protein sequence, read N- to C-terminus: Cell division protein SepF (186 aa).

The segment at 24–91 is disordered; sequence EDEEEEERYA…HNPPHLRAVP (68 aa).

It belongs to the SepF family. As to quaternary structure, homodimer. Interacts with FtsZ.

It localises to the cytoplasm. Functionally, cell division protein that is part of the divisome complex and is recruited early to the Z-ring. Probably stimulates Z-ring formation, perhaps through the cross-linking of FtsZ protofilaments. Its function overlaps with FtsA. The chain is Cell division protein SepF from Rubrobacter xylanophilus (strain DSM 9941 / JCM 11954 / NBRC 16129 / PRD-1).